Consider the following 175-residue polypeptide: Adenine phosphoribosyltransferase (175 aa).

The protein belongs to the purine/pyrimidine phosphoribosyltransferase family. In terms of assembly, homodimer.

Its subcellular location is the cytoplasm. It catalyses the reaction AMP + diphosphate = 5-phospho-alpha-D-ribose 1-diphosphate + adenine. Its pathway is purine metabolism; AMP biosynthesis via salvage pathway; AMP from adenine: step 1/1. In terms of biological role, catalyzes a salvage reaction resulting in the formation of AMP, that is energically less costly than de novo synthesis. This Lacticaseibacillus paracasei (strain ATCC 334 / BCRC 17002 / CCUG 31169 / CIP 107868 / KCTC 3260 / NRRL B-441) (Lactobacillus paracasei) protein is Adenine phosphoribosyltransferase.